Consider the following 369-residue polypeptide: 3-isopropylmalate dehydrogenase (369 aa).

NAD(+) is bound at residue 76–89 (GPKWDRNPSHLRPE). Arg96, Arg106, Arg134, and Asp223 together coordinate substrate. Positions 223, 247, and 251 each coordinate Mg(2+). 281–293 (GSAPDIAGQNKAN) contacts NAD(+).

The protein belongs to the isocitrate and isopropylmalate dehydrogenases family. LeuB type 1 subfamily. As to quaternary structure, homodimer. Mg(2+) serves as cofactor. Mn(2+) is required as a cofactor.

The protein resides in the cytoplasm. It catalyses the reaction (2R,3S)-3-isopropylmalate + NAD(+) = 4-methyl-2-oxopentanoate + CO2 + NADH. It participates in amino-acid biosynthesis; L-leucine biosynthesis; L-leucine from 3-methyl-2-oxobutanoate: step 3/4. Functionally, catalyzes the oxidation of 3-carboxy-2-hydroxy-4-methylpentanoate (3-isopropylmalate) to 3-carboxy-4-methyl-2-oxopentanoate. The product decarboxylates to 4-methyl-2 oxopentanoate. The sequence is that of 3-isopropylmalate dehydrogenase (leuB) from Priestia megaterium (strain DSM 319 / IMG 1521) (Bacillus megaterium).